A 431-amino-acid chain; its full sequence is RNA-binding motif, single-stranded-interacting protein 3 (431 aa).

Positions 28-53 (YAPAPHPMAPPSPSTNSSSNSSGEQL) are disordered. Over residues 31 to 40 (APHPMAPPSP) the composition is skewed to pro residues. RRM domains follow at residues 56–129 (TNLY…MAKQ) and 135–220 (TNLY…FADG). Disordered regions lie at residues 220 to 242 (GGQK…PREG) and 393 to 431 (TSPQ…QSKP). The segment covering 401-411 (SSQDSSGQQQQ) has biased composition (low complexity).

It localises to the cytoplasm. Binds poly(A) and poly(U) oligoribonucleotides. This is RNA-binding motif, single-stranded-interacting protein 3 (Rbms3) from Mus musculus (Mouse).